Here is an 84-residue protein sequence, read N- to C-terminus: Exodeoxyribonuclease 7 small subunit (84 aa).

Belongs to the XseB family. In terms of assembly, heterooligomer composed of large and small subunits.

The protein localises to the cytoplasm. The enzyme catalyses Exonucleolytic cleavage in either 5'- to 3'- or 3'- to 5'-direction to yield nucleoside 5'-phosphates.. Functionally, bidirectionally degrades single-stranded DNA into large acid-insoluble oligonucleotides, which are then degraded further into small acid-soluble oligonucleotides. This chain is Exodeoxyribonuclease 7 small subunit, found in Bartonella quintana (strain Toulouse) (Rochalimaea quintana).